The chain runs to 327 residues: Zinc transport protein ZntB (327 aa).

Topologically, residues 1 to 273 are cytoplasmic; it reads MEAIKGSEVN…SRRSYTMSLM (273 aa). A helical transmembrane segment spans residues 274-294; that stretch reads AMVFLPSTFLTGLFGVNLGGI. The Periplasmic segment spans residues 295 to 300; sequence PGGGWH. Residues 301 to 321 traverse the membrane as a helical segment; sequence LGFSVFCVALVLLIGGVTWWL. The Cytoplasmic portion of the chain corresponds to 322–327; the sequence is HRSKWL.

The protein belongs to the CorA metal ion transporter (MIT) (TC 1.A.35) family.

The protein resides in the cell inner membrane. The catalysed reaction is Zn(2+)(out) + H(+)(out) = Zn(2+)(in) + H(+)(in). Zinc transporter. Acts as a Zn(2+):proton symporter, which likely mediates zinc ion uptake. In Cronobacter sakazakii (strain ATCC BAA-894) (Enterobacter sakazakii), this protein is Zinc transport protein ZntB.